Here is a 372-residue protein sequence, read N- to C-terminus: Chaperone protein DnaJ (372 aa).

In terms of domain architecture, J spans 5-69 (DYYEVLGLSK…QKKAQYDQFG (65 aa)). A CR-type zinc finger spans residues 129–211 (GAEKEISVKK…CGGTGRKVKT (83 aa)). Cys-142, Cys-145, Cys-159, Cys-162, Cys-185, Cys-188, Cys-199, and Cys-202 together coordinate Zn(2+). 4 CXXCXGXG motif repeats span residues 142-149 (CDTCDGSG), 159-166 (CSTCGGRG), 185-192 (CPDCGGTG), and 199-206 (CSDCGGTG).

The protein belongs to the DnaJ family. Homodimer. Zn(2+) is required as a cofactor.

The protein localises to the cytoplasm. Its function is as follows. Participates actively in the response to hyperosmotic and heat shock by preventing the aggregation of stress-denatured proteins and by disaggregating proteins, also in an autonomous, DnaK-independent fashion. Unfolded proteins bind initially to DnaJ; upon interaction with the DnaJ-bound protein, DnaK hydrolyzes its bound ATP, resulting in the formation of a stable complex. GrpE releases ADP from DnaK; ATP binding to DnaK triggers the release of the substrate protein, thus completing the reaction cycle. Several rounds of ATP-dependent interactions between DnaJ, DnaK and GrpE are required for fully efficient folding. Also involved, together with DnaK and GrpE, in the DNA replication of plasmids through activation of initiation proteins. In Macrococcus caseolyticus (strain JCSC5402) (Macrococcoides caseolyticum), this protein is Chaperone protein DnaJ.